The primary structure comprises 113 residues: Protein PucD (113 aa).

Its function is as follows. Seems to be required for the LH-II stabilization. This is Protein PucD (pucD) from Rhodobacter capsulatus (Rhodopseudomonas capsulata).